Consider the following 396-residue polypeptide: 8-amino-7-oxononanoate synthase (396 aa).

Residue Arg19 coordinates substrate. A pyridoxal 5'-phosphate-binding site is contributed by 106–107 (GY). Position 131 (His131) interacts with substrate. The pyridoxal 5'-phosphate site is built by Ser176, His204, and Thr233. An N6-(pyridoxal phosphate)lysine modification is found at Lys236. Thr350 provides a ligand contact to substrate.

This sequence belongs to the class-II pyridoxal-phosphate-dependent aminotransferase family. BioF subfamily. In terms of assembly, homodimer. It depends on pyridoxal 5'-phosphate as a cofactor.

It carries out the reaction 6-carboxyhexanoyl-[ACP] + L-alanine + H(+) = (8S)-8-amino-7-oxononanoate + holo-[ACP] + CO2. Its pathway is cofactor biosynthesis; biotin biosynthesis. Its function is as follows. Catalyzes the decarboxylative condensation of pimeloyl-[acyl-carrier protein] and L-alanine to produce 8-amino-7-oxononanoate (AON), [acyl-carrier protein], and carbon dioxide. This Pseudomonas savastanoi pv. phaseolicola (strain 1448A / Race 6) (Pseudomonas syringae pv. phaseolicola (strain 1448A / Race 6)) protein is 8-amino-7-oxononanoate synthase.